Consider the following 158-residue polypeptide: Transcription elongation factor GreA (158 aa).

Residues 10–76 (TLEGKKKLEE…QIEKMIRNAE (67 aa)) adopt a coiled-coil conformation.

This sequence belongs to the GreA/GreB family.

Functionally, necessary for efficient RNA polymerase transcription elongation past template-encoded arresting sites. The arresting sites in DNA have the property of trapping a certain fraction of elongating RNA polymerases that pass through, resulting in locked ternary complexes. Cleavage of the nascent transcript by cleavage factors such as GreA or GreB allows the resumption of elongation from the new 3'terminus. GreA releases sequences of 2 to 3 nucleotides. The sequence is that of Transcription elongation factor GreA from Halalkalibacterium halodurans (strain ATCC BAA-125 / DSM 18197 / FERM 7344 / JCM 9153 / C-125) (Bacillus halodurans).